Consider the following 502-residue polypeptide: NAD(P)H-quinone oxidoreductase chain 4, chloroplastic (502 aa).

14 helical membrane-spanning segments follow: residues 4 to 24 (FPWLTILVVLPIFAGSLIFFL), 37 to 57 (ISICLLEFLLMTYAFCYHFQL), 87 to 107 (LGSILLTGFITTLATLAAWPV), 113 to 130 (LFYFLMLAMYSGQIGLFS), 134 to 154 (LLLFFIMWELELIPVYLLLSM), 167 to 187 (FILYTAGGSIFFLIGVLGMGL), 213 to 233 (ILLYFGFLIAYAVKLPIIPLH), 244 to 264 (HYSTCMLLAGILLKMGAYGLI), 274 to 294 (AHYLFSPWLVIIGAIQIIYAA), 315 to 335 (MGFIIIGIGSITNIGLNGAIL), 336 to 356 (QILSHGFIGATLFFLAGTASD), 388 to 408 (LALPGMSGFVAELVVFFGLIT), 419 to 439 (LITFVMAIGMILTPIYLLSML), and 464 to 484 (LFILICIFLPVIGIGIYPDFV).

This sequence belongs to the complex I subunit 4 family.

It is found in the plastid. The protein localises to the chloroplast thylakoid membrane. It carries out the reaction a plastoquinone + NADH + (n+1) H(+)(in) = a plastoquinol + NAD(+) + n H(+)(out). The catalysed reaction is a plastoquinone + NADPH + (n+1) H(+)(in) = a plastoquinol + NADP(+) + n H(+)(out). In Lolium perenne (Perennial ryegrass), this protein is NAD(P)H-quinone oxidoreductase chain 4, chloroplastic.